A 146-amino-acid polypeptide reads, in one-letter code: Large ribosomal subunit protein bL21 (146 aa).

The disordered stretch occupies residues 117–146 (ITIGKSAPKSSSKKETVKKETKPKSEKSTN). The span at 128–146 (SKKETVKKETKPKSEKSTN) shows a compositional bias: basic and acidic residues.

This sequence belongs to the bacterial ribosomal protein bL21 family. Part of the 50S ribosomal subunit. Contacts protein L20.

In terms of biological role, this protein binds to 23S rRNA in the presence of protein L20. The protein is Large ribosomal subunit protein bL21 of Prochlorococcus marinus (strain MIT 9301).